A 198-amino-acid chain; its full sequence is V-type proton ATPase subunit E (198 aa).

This sequence belongs to the V-ATPase E subunit family.

Functionally, produces ATP from ADP in the presence of a proton gradient across the membrane. This is V-type proton ATPase subunit E from Borrelia duttonii (strain Ly).